The chain runs to 216 residues: Thiamine-phosphate synthase (216 aa).

4-amino-2-methyl-5-(diphosphooxymethyl)pyrimidine contacts are provided by residues 35 to 39 (QLRDK) and Asn-67. The Mg(2+) site is built by Asp-68 and Asp-87. Residue Ser-106 coordinates 4-amino-2-methyl-5-(diphosphooxymethyl)pyrimidine. A 2-[(2R,5Z)-2-carboxy-4-methylthiazol-5(2H)-ylidene]ethyl phosphate-binding site is contributed by 132 to 134 (TSS). Lys-135 is a 4-amino-2-methyl-5-(diphosphooxymethyl)pyrimidine binding site. Residues Gly-163 and 183 to 184 (IS) each bind 2-[(2R,5Z)-2-carboxy-4-methylthiazol-5(2H)-ylidene]ethyl phosphate.

Belongs to the thiamine-phosphate synthase family. Mg(2+) is required as a cofactor.

The enzyme catalyses 2-[(2R,5Z)-2-carboxy-4-methylthiazol-5(2H)-ylidene]ethyl phosphate + 4-amino-2-methyl-5-(diphosphooxymethyl)pyrimidine + 2 H(+) = thiamine phosphate + CO2 + diphosphate. It catalyses the reaction 2-(2-carboxy-4-methylthiazol-5-yl)ethyl phosphate + 4-amino-2-methyl-5-(diphosphooxymethyl)pyrimidine + 2 H(+) = thiamine phosphate + CO2 + diphosphate. It carries out the reaction 4-methyl-5-(2-phosphooxyethyl)-thiazole + 4-amino-2-methyl-5-(diphosphooxymethyl)pyrimidine + H(+) = thiamine phosphate + diphosphate. The protein operates within cofactor biosynthesis; thiamine diphosphate biosynthesis; thiamine phosphate from 4-amino-2-methyl-5-diphosphomethylpyrimidine and 4-methyl-5-(2-phosphoethyl)-thiazole: step 1/1. Its function is as follows. Condenses 4-methyl-5-(beta-hydroxyethyl)thiazole monophosphate (THZ-P) and 2-methyl-4-amino-5-hydroxymethyl pyrimidine pyrophosphate (HMP-PP) to form thiamine monophosphate (TMP). This is Thiamine-phosphate synthase from Methanoregula boonei (strain DSM 21154 / JCM 14090 / 6A8).